The following is a 158-amino-acid chain: Cyclic pyranopterin monophosphate synthase (158 aa).

Substrate contacts are provided by residues 75–77 and 113–114; these read LCH and ME. Residue D128 is part of the active site.

Belongs to the MoaC family. Homohexamer; trimer of dimers.

The catalysed reaction is (8S)-3',8-cyclo-7,8-dihydroguanosine 5'-triphosphate = cyclic pyranopterin phosphate + diphosphate. It functions in the pathway cofactor biosynthesis; molybdopterin biosynthesis. Functionally, catalyzes the conversion of (8S)-3',8-cyclo-7,8-dihydroguanosine 5'-triphosphate to cyclic pyranopterin monophosphate (cPMP). The protein is Cyclic pyranopterin monophosphate synthase of Histophilus somni (strain 2336) (Haemophilus somnus).